Consider the following 487-residue polypeptide: 1-aminocyclopropane-1-carboxylate synthase 1 (487 aa).

N6-(pyridoxal phosphate)lysine is present on lysine 286.

Belongs to the class-I pyridoxal-phosphate-dependent aminotransferase family. In terms of assembly, homodimer. Requires pyridoxal 5'-phosphate as cofactor.

It carries out the reaction S-adenosyl-L-methionine = 1-aminocyclopropane-1-carboxylate + S-methyl-5'-thioadenosine + H(+). Its pathway is alkene biosynthesis; ethylene biosynthesis via S-adenosyl-L-methionine; ethylene from S-adenosyl-L-methionine: step 1/2. In terms of biological role, catalyzes the formation of 1-aminocyclopropane-1-carboxylate, a direct precursor of ethylene in higher plants. The polypeptide is 1-aminocyclopropane-1-carboxylate synthase 1 (ACC1) (Oryza sativa subsp. indica (Rice)).